The chain runs to 275 residues: NH(3)-dependent NAD(+) synthetase (275 aa).

46–53 lines the ATP pocket; the sequence is GISGGQDS. A Mg(2+)-binding site is contributed by Asp52. Arg140 is a deamido-NAD(+) binding site. Thr160 serves as a coordination point for ATP. Glu165 contributes to the Mg(2+) binding site. 2 residues coordinate deamido-NAD(+): Lys173 and Asp180. ATP is bound by residues Lys189 and Thr211. 260-261 is a deamido-NAD(+) binding site; sequence HK.

The protein belongs to the NAD synthetase family. As to quaternary structure, homodimer.

It catalyses the reaction deamido-NAD(+) + NH4(+) + ATP = AMP + diphosphate + NAD(+) + H(+). Its pathway is cofactor biosynthesis; NAD(+) biosynthesis; NAD(+) from deamido-NAD(+) (ammonia route): step 1/1. Its function is as follows. Catalyzes the ATP-dependent amidation of deamido-NAD to form NAD. Uses ammonia as a nitrogen source. This Shigella dysenteriae serotype 1 (strain Sd197) protein is NH(3)-dependent NAD(+) synthetase.